Here is a 202-residue protein sequence, read N- to C-terminus: ATP-dependent Clp protease proteolytic subunit (202 aa).

The Nucleophile role is filled by serine 106. Histidine 131 is a catalytic residue.

The protein belongs to the peptidase S14 family. As to quaternary structure, fourteen ClpP subunits assemble into 2 heptameric rings which stack back to back to give a disk-like structure with a central cavity, resembling the structure of eukaryotic proteasomes.

It localises to the cytoplasm. It catalyses the reaction Hydrolysis of proteins to small peptides in the presence of ATP and magnesium. alpha-casein is the usual test substrate. In the absence of ATP, only oligopeptides shorter than five residues are hydrolyzed (such as succinyl-Leu-Tyr-|-NHMec, and Leu-Tyr-Leu-|-Tyr-Trp, in which cleavage of the -Tyr-|-Leu- and -Tyr-|-Trp bonds also occurs).. In terms of biological role, cleaves peptides in various proteins in a process that requires ATP hydrolysis. Has a chymotrypsin-like activity. Plays a major role in the degradation of misfolded proteins. The sequence is that of ATP-dependent Clp protease proteolytic subunit from Acidovorax sp. (strain JS42).